Reading from the N-terminus, the 489-residue chain is Cytochrome P450 monooxygenase tazI (489 aa).

Cys433 is a heme binding site.

Belongs to the cytochrome P450 family. Heme is required as a cofactor.

The protein operates within secondary metabolite biosynthesis. Its function is as follows. Cytochrome P450 monooxygenase; part of the gene cluster that mediates the biosynthesis of azaterrilone A and other azaphilones, a class of fungal metabolites characterized by a highly oxygenated pyrano-quinone bicyclic core and exhibiting a broad range of bioactivities. The first step of the pathway begins with the non-reducing polyketide synthase tazA that assembles one acetyl-CoA starter unit, five malonyl-CoA units, and catalyzes a series of Claisen condensations, methylation, PT-mediated cyclization, and finally releases the first hexaketide precursor through the R-domain. The tazA product then undergoes reduction on its terminal ketone and the following pyran-ring formation by yet undetermined enzyme(s). Dehydration and enoyl reduction, possibly involving the trans-enoyl reductase tazE leads to the next intermediate. TazD is predicted as an acetyltransferase and might catalyze the acetylation steps leading to the synthesis of azaterrilone A. Azaterrilone A is not the final product of the taz pathway and both the highly reducing polyketide synthase tazB and the dual enzyme tazHJ catalyze late steps of the pathway, leading to the production of the 2 final stereoisomers that contain additional polyketide modification whose structures have still to be determined. In Aspergillus terreus (strain NIH 2624 / FGSC A1156), this protein is Cytochrome P450 monooxygenase tazI.